The sequence spans 260 residues: D-threitol dehydrogenase (260 aa).

21-50 (LVTGAASGIGAAIASAYATKGARIAAVDLN) is an NAD(+) binding site. The Proton acceptor role is filled by Tyr-166. An NAD(+)-binding site is contributed by Lys-170.

Belongs to the short-chain dehydrogenases/reductases (SDR) family.

It carries out the reaction D-threitol + NAD(+) = D-erythrulose + NADH + H(+). Its pathway is carbohydrate metabolism; D-threitol degradation. Its function is as follows. Catalyzes the NAD-dependent reversible oxidation of D-threitol. Involved in the degradation pathway of D-threitol, that allows M.smegmatis to grow on this compound as the sole carbon source. Does not catalyze the oxidation of xylitol, L-sorbitol, and L-sorbose. The protein is D-threitol dehydrogenase of Mycolicibacterium smegmatis (strain ATCC 700084 / mc(2)155) (Mycobacterium smegmatis).